Reading from the N-terminus, the 335-residue chain is MGKLHVIEAKGTERLKRGFARMVKGGVIMDVTNAEQARIAEEAGAVSVMALHKVPADIRKAGGVARMAPIEKIQEIMDAVTIPVMAKVRIGHVAEARVLEALGVDMIDESEVLTPADPFFHIDKREFNVPFVCGARNLGEAVRRIWEGSAMIRTKGEAGTGNIVEAVRHVRLVADNIRLIQRMTDEQVYAVAEKFAEPYLRLARQIREISGLPEQILENEPVYGHYTYREIVDGLYKILLEIKKLGRLPVVNFAAGGVATPADAALMMQMGMDGVFVGSGIFKSSTPEKMARAIVEAVNHWDEPDVIAAISKEIGEPMKGLEIEELEVRLEERGV.

Aspartate 30 serves as a coordination point for D-ribose 5-phosphate. Lysine 87 functions as the Schiff-base intermediate with D-ribose 5-phosphate in the catalytic mechanism. Position 159 (glycine 159) interacts with D-ribose 5-phosphate. D-glyceraldehyde 3-phosphate is bound at residue arginine 171. Residues glycine 257 and 278-279 contribute to the D-ribose 5-phosphate site; that span reads GS.

This sequence belongs to the PdxS/SNZ family. As to quaternary structure, in the presence of PdxT, forms a dodecamer of heterodimers.

The enzyme catalyses aldehydo-D-ribose 5-phosphate + D-glyceraldehyde 3-phosphate + L-glutamine = pyridoxal 5'-phosphate + L-glutamate + phosphate + 3 H2O + H(+). It participates in cofactor biosynthesis; pyridoxal 5'-phosphate biosynthesis. Functionally, catalyzes the formation of pyridoxal 5'-phosphate from ribose 5-phosphate (RBP), glyceraldehyde 3-phosphate (G3P) and ammonia. The ammonia is provided by the PdxT subunit. Can also use ribulose 5-phosphate and dihydroxyacetone phosphate as substrates, resulting from enzyme-catalyzed isomerization of RBP and G3P, respectively. In Thermococcus onnurineus (strain NA1), this protein is Pyridoxal 5'-phosphate synthase subunit PdxS.